The sequence spans 278 residues: 2-succinyl-6-hydroxy-2,4-cyclohexadiene-1-carboxylate synthase (278 aa).

Belongs to the AB hydrolase superfamily. MenH family. As to quaternary structure, monomer.

It carries out the reaction 5-enolpyruvoyl-6-hydroxy-2-succinyl-cyclohex-3-ene-1-carboxylate = (1R,6R)-6-hydroxy-2-succinyl-cyclohexa-2,4-diene-1-carboxylate + pyruvate. It participates in quinol/quinone metabolism; 1,4-dihydroxy-2-naphthoate biosynthesis; 1,4-dihydroxy-2-naphthoate from chorismate: step 3/7. It functions in the pathway quinol/quinone metabolism; menaquinone biosynthesis. In terms of biological role, catalyzes a proton abstraction reaction that results in 2,5-elimination of pyruvate from 2-succinyl-5-enolpyruvyl-6-hydroxy-3-cyclohexene-1-carboxylate (SEPHCHC) and the formation of 2-succinyl-6-hydroxy-2,4-cyclohexadiene-1-carboxylate (SHCHC). This chain is 2-succinyl-6-hydroxy-2,4-cyclohexadiene-1-carboxylate synthase, found in Photorhabdus laumondii subsp. laumondii (strain DSM 15139 / CIP 105565 / TT01) (Photorhabdus luminescens subsp. laumondii).